Consider the following 387-residue polypeptide: 3-ketoacyl-CoA thiolase (387 aa).

The active-site Acyl-thioester intermediate is the Cys91. Residues His343 and Cys373 each act as proton acceptor in the active site.

This sequence belongs to the thiolase-like superfamily. Thiolase family. In terms of assembly, heterotetramer of two alpha chains (FadB) and two beta chains (FadA).

It is found in the cytoplasm. The catalysed reaction is an acyl-CoA + acetyl-CoA = a 3-oxoacyl-CoA + CoA. It participates in lipid metabolism; fatty acid beta-oxidation. Functionally, catalyzes the final step of fatty acid oxidation in which acetyl-CoA is released and the CoA ester of a fatty acid two carbons shorter is formed. In Serratia proteamaculans (strain 568), this protein is 3-ketoacyl-CoA thiolase.